Reading from the N-terminus, the 513-residue chain is Na(+)/H(+) antiporter NhaB (513 aa).

The next 12 helical transmembrane spans lie at 23–43 (LALIIFLIVNPLIFLISPFVA), 52–72 (IFTLAMALKCYPLLPGGLLAI), 97–117 (LLLMFMVAGIYFMKQLLLFIF), 120–140 (LLLSIRSKMLLSLSFCVAAAF), 144–164 (FLDALTVVAVVISVAVGFYGI), 202–222 (LMMHAGVGTALGGVMTMVGEP), 238–258 (FFLRMSPVTVPVLICGLLTCL), 303–323 (AIIGVWLVTALALHLAEVGLI), 348–368 (TESLPFTALLTVFFSVVAVII), 391–411 (LFYIFNGLLSSISDNVFVGTI), 447–467 (ATPNGQAAFLFLLTSALAPLI), and 475–495 (VWMALPYTLVLTLVGLLCVEF).

Belongs to the NhaB Na(+)/H(+) (TC 2.A.34) antiporter family.

It localises to the cell inner membrane. The enzyme catalyses 2 Na(+)(in) + 3 H(+)(out) = 2 Na(+)(out) + 3 H(+)(in). Na(+)/H(+) antiporter that extrudes sodium in exchange for external protons. The sequence is that of Na(+)/H(+) antiporter NhaB from Escherichia coli O6:K15:H31 (strain 536 / UPEC).